We begin with the raw amino-acid sequence, 105 residues long: Putative membrane protein insertion efficiency factor (105 aa).

Belongs to the UPF0161 family.

It is found in the cell inner membrane. In terms of biological role, could be involved in insertion of integral membrane proteins into the membrane. The protein is Putative membrane protein insertion efficiency factor of Nitratidesulfovibrio vulgaris (strain DSM 19637 / Miyazaki F) (Desulfovibrio vulgaris).